Reading from the N-terminus, the 599-residue chain is Interleukin-18 receptor accessory protein (599 aa).

The first 19 residues, 1 to 19, serve as a signal peptide directing secretion; sequence MLCLGWIFLWLVAGERIKG. Residues 20–356 are Extracellular-facing; it reads FNISGCSTKK…TQSVQLKEKR (337 aa). Residues Asn-21, Asn-119, and Asn-152 are each glycosylated (N-linked (GlcNAc...) asparagine). A disulfide bridge links Cys-46 with Cys-126. Ig-like C2-type domains lie at 149-235 and 251-353; these read PQTN…WTVR and PDIL…VQLK. Cystine bridges form between Cys-155–Cys-180, Cys-175–Cys-221, Cys-180–Cys-221, and Cys-273–Cys-337. Residue Asn-345 is glycosylated (N-linked (GlcNAc...) asparagine). The helical transmembrane segment at 357 to 377 threads the bilayer; sequence GVVLLYILLGTIGTLVAVLAA. Over 378 to 599 the chain is Cytoplasmic; it reads SALLYRHWIE…TGRSSQPKEW (222 aa). Residues 406–559 form the TIR domain; sequence KDFDAFVSYA…RFWAKMRYHM (154 aa). Glu-493 is a catalytic residue.

It belongs to the interleukin-1 receptor family. As to quaternary structure, forms a ternary complex with IL18 and IL18R1. Within this complex, IL18R1 is involved in ligand-binding and IL18RAP in signaling leading to NF-kappa-B and JNK activation. Post-translationally, N-glycosylated. Detected in adrenal gland, bone marrow, brain, fetal brain, fetal liver, heart, kidney, lung, liver, peripheral blood leukocytes, placenta, prostate, salivary gland, skeletal muscle, spinal cord, testis, thymus, thyroid, trachea and uterus. Strongly expressed in peripheral blood leukocytes and spleen and, to a lesser extent, in colon. Specifically coexpressed with IL18R1 in T-helper 1 (Th1)cells.

The protein resides in the cell membrane. It carries out the reaction NAD(+) + H2O = ADP-D-ribose + nicotinamide + H(+). Its function is as follows. Within the IL18 receptor complex, does not mediate IL18-binding, but involved in IL18-dependent signal transduction, leading to NF-kappa-B and JNK activation. May play a role in IL18-mediated IFNG synthesis from T-helper 1 (Th1) cells. This chain is Interleukin-18 receptor accessory protein, found in Homo sapiens (Human).